Consider the following 417-residue polypeptide: Serine hydroxymethyltransferase (417 aa).

Residues L122 and 126–128 each bind (6S)-5,6,7,8-tetrahydrofolate; that span reads GHL. An N6-(pyridoxal phosphate)lysine modification is found at K230. Residue 355-357 participates in (6S)-5,6,7,8-tetrahydrofolate binding; that stretch reads SPF.

This sequence belongs to the SHMT family. As to quaternary structure, homodimer. Pyridoxal 5'-phosphate serves as cofactor.

The protein localises to the cytoplasm. The catalysed reaction is (6R)-5,10-methylene-5,6,7,8-tetrahydrofolate + glycine + H2O = (6S)-5,6,7,8-tetrahydrofolate + L-serine. The protein operates within one-carbon metabolism; tetrahydrofolate interconversion. Its pathway is amino-acid biosynthesis; glycine biosynthesis; glycine from L-serine: step 1/1. Its function is as follows. Catalyzes the reversible interconversion of serine and glycine with tetrahydrofolate (THF) serving as the one-carbon carrier. This reaction serves as the major source of one-carbon groups required for the biosynthesis of purines, thymidylate, methionine, and other important biomolecules. Also exhibits THF-independent aldolase activity toward beta-hydroxyamino acids, producing glycine and aldehydes, via a retro-aldol mechanism. The protein is Serine hydroxymethyltransferase of Francisella tularensis subsp. mediasiatica (strain FSC147).